The following is a 359-amino-acid chain: Nicotinate-nucleotide--dimethylbenzimidazole phosphoribosyltransferase (359 aa).

Glutamate 318 functions as the Proton acceptor in the catalytic mechanism.

It belongs to the CobT family. Homodimer.

The catalysed reaction is 5,6-dimethylbenzimidazole + nicotinate beta-D-ribonucleotide = alpha-ribazole 5'-phosphate + nicotinate + H(+). It functions in the pathway nucleoside biosynthesis; alpha-ribazole biosynthesis; alpha-ribazole from 5,6-dimethylbenzimidazole: step 1/2. In terms of biological role, catalyzes the synthesis of alpha-ribazole-5'-phosphate from nicotinate mononucleotide (NAMN) and 5,6-dimethylbenzimidazole (DMB). The sequence is that of Nicotinate-nucleotide--dimethylbenzimidazole phosphoribosyltransferase from Escherichia coli O8 (strain IAI1).